Reading from the N-terminus, the 273-residue chain is MPWPFSSSSSAGSPTHSQKEDGARSKPTSWNDLLPKPDPPLHAAKEWAPVFLTSVASLAAFIFYQSRLRRFPTAGHIQPDLFRKRTLLGRVTSVGDGDNFHMFHTPGGRLAGWDWLRKVPTTKTALKGKTIPVRMAGIDAPEGAHFGRPGQPGAAEALQWLRSYILDKRIWVRIHRRDQYDRVVATVYVRRFLFKKDVGLEMLKLGLATTYEAKSGVEWGGAEEAYKAAEAKAQSKRLGIWNGEASTFESPRAYKTRTNETEGKKSEWFSGWS.

A compositionally biased stretch (low complexity) spans 1–16 (MPWPFSSSSSAGSPTH). Residues 1-36 (MPWPFSSSSSAGSPTHSQKEDGARSKPTSWNDLLPK) form a disordered region. The helical transmembrane segment at 47 to 64 (WAPVFLTSVASLAAFIFY) threads the bilayer. The 159-residue stretch at 85-243 (RTLLGRVTSV…QSKRLGIWNG (159 aa)) folds into the TNase-like domain. R134 is a catalytic residue. Residue D139 coordinates Ca(2+). Active-site residues include E142 and R182. The tract at residues 252 to 273 (RAYKTRTNETEGKKSEWFSGWS) is disordered. The segment covering 257–267 (RTNETEGKKSE) has biased composition (basic and acidic residues).

This sequence belongs to the LCL3 family.

It localises to the mitochondrion. The protein resides in the membrane. The protein is Probable endonuclease LCL3 (LCL3) of Colletotrichum graminicola (strain M1.001 / M2 / FGSC 10212) (Maize anthracnose fungus).